The primary structure comprises 85 residues: MQEGIHPEYGPVVFYDRSADKYFLTKSTLVAKAVNLPTIDWEDGNTYPLVNVEVSSYSHPFYTGKNVVIDAAGQVQKFNARYGRK.

It belongs to the bacterial ribosomal protein bL31 family. Type B subfamily. In terms of assembly, part of the 50S ribosomal subunit.

The chain is Large ribosomal subunit protein bL31B from Bifidobacterium longum subsp. infantis (strain ATCC 15697 / DSM 20088 / JCM 1222 / NCTC 11817 / S12).